A 127-amino-acid polypeptide reads, in one-letter code: Large ribosomal subunit protein bL17 (127 aa).

It belongs to the bacterial ribosomal protein bL17 family. As to quaternary structure, part of the 50S ribosomal subunit. Contacts protein L32.

This chain is Large ribosomal subunit protein bL17, found in Xanthomonas oryzae pv. oryzae (strain KACC10331 / KXO85).